A 321-amino-acid polypeptide reads, in one-letter code: Aspartate carbamoyltransferase catalytic subunit (321 aa).

Arg65 and Thr66 together coordinate carbamoyl phosphate. Residue Lys93 participates in L-aspartate binding. Residues Arg115, His143, and Gln146 each contribute to the carbamoyl phosphate site. Arg176 and Arg230 together coordinate L-aspartate. Positions 271 and 272 each coordinate carbamoyl phosphate.

The protein belongs to the aspartate/ornithine carbamoyltransferase superfamily. ATCase family. As to quaternary structure, heterododecamer (2C3:3R2) of six catalytic PyrB chains organized as two trimers (C3), and six regulatory PyrI chains organized as three dimers (R2).

It carries out the reaction carbamoyl phosphate + L-aspartate = N-carbamoyl-L-aspartate + phosphate + H(+). The protein operates within pyrimidine metabolism; UMP biosynthesis via de novo pathway; (S)-dihydroorotate from bicarbonate: step 2/3. Its function is as follows. Catalyzes the condensation of carbamoyl phosphate and aspartate to form carbamoyl aspartate and inorganic phosphate, the committed step in the de novo pyrimidine nucleotide biosynthesis pathway. This is Aspartate carbamoyltransferase catalytic subunit from Bartonella quintana (strain Toulouse) (Rochalimaea quintana).